The primary structure comprises 201 residues: Ribonuclease HII (201 aa).

The region spanning 12-201 (DLVAGVDEVG…VRELLDVSVQ (190 aa)) is the RNase H type-2 domain. A divalent metal cation contacts are provided by Asp18, Glu19, and Asp110.

It belongs to the RNase HII family. Mn(2+) serves as cofactor. Requires Mg(2+) as cofactor.

The protein localises to the cytoplasm. It carries out the reaction Endonucleolytic cleavage to 5'-phosphomonoester.. In terms of biological role, endonuclease that specifically degrades the RNA of RNA-DNA hybrids. The polypeptide is Ribonuclease HII (Pseudomonas aeruginosa (strain ATCC 15692 / DSM 22644 / CIP 104116 / JCM 14847 / LMG 12228 / 1C / PRS 101 / PAO1)).